The sequence spans 73 residues: Putative membrane protein insertion efficiency factor (73 aa).

The protein belongs to the UPF0161 family.

The protein localises to the cell inner membrane. Could be involved in insertion of integral membrane proteins into the membrane. This Rickettsia bellii (strain RML369-C) protein is Putative membrane protein insertion efficiency factor.